The chain runs to 120 residues: Large ribosomal subunit protein uL18 (120 aa).

Belongs to the universal ribosomal protein uL18 family. In terms of assembly, part of the 50S ribosomal subunit; part of the 5S rRNA/L5/L18/L25 subcomplex. Contacts the 5S and 23S rRNAs.

In terms of biological role, this is one of the proteins that bind and probably mediate the attachment of the 5S RNA into the large ribosomal subunit, where it forms part of the central protuberance. The sequence is that of Large ribosomal subunit protein uL18 from Allorhizobium ampelinum (strain ATCC BAA-846 / DSM 112012 / S4) (Agrobacterium vitis (strain S4)).